The chain runs to 111 residues: Nucleoid-associated protein SynRCC307_0025 (111 aa).

The protein belongs to the YbaB/EbfC family. In terms of assembly, homodimer.

It localises to the cytoplasm. It is found in the nucleoid. In terms of biological role, binds to DNA and alters its conformation. May be involved in regulation of gene expression, nucleoid organization and DNA protection. In Synechococcus sp. (strain RCC307), this protein is Nucleoid-associated protein SynRCC307_0025.